We begin with the raw amino-acid sequence, 665 residues long: Methionine--tRNA ligase (665 aa).

Residues 13 to 23 carry the 'HIGH' region motif; it reads YYPSGKLHIGS. The 'KMSKS' region motif lies at 309–313; sequence KMSKS. Lys312 provides a ligand contact to ATP. One can recognise a tRNA-binding domain in the interval 562 to 665; sequence DFDKVEIRVA…PAVPNGSVIG (104 aa).

Belongs to the class-I aminoacyl-tRNA synthetase family. MetG type 2B subfamily. As to quaternary structure, homodimer.

The protein localises to the cytoplasm. The catalysed reaction is tRNA(Met) + L-methionine + ATP = L-methionyl-tRNA(Met) + AMP + diphosphate. Functionally, is required not only for elongation of protein synthesis but also for the initiation of all mRNA translation through initiator tRNA(fMet) aminoacylation. The chain is Methionine--tRNA ligase (metG) from Streptococcus pneumoniae serotype 4 (strain ATCC BAA-334 / TIGR4).